We begin with the raw amino-acid sequence, 362 residues long: MKLHCCLFTLVASIIVPAAFVLEDVDFDQMVSLEANRSSYNASFPSSFELSASSHSDDDVIIAKEGTSVSIECLLTASHYEDVHWHNSKGQQLDGRSRGGKWLVSDNFLNITNVAFDDRGLYTCFVTSPIRASYSVTLRVIFTSGDMSVYYMIVCLIAFTITLILNVTRLCMMSSHLRKTEKAINEFFRTEGAEKLQKAFEIAKRIPIITSAKTLELAKVTQFKTMEFARYIEELARSVPLPPLILNCRAFVEEMFEAVRVDDPDDLGERIKERPALNAQGGIYVINPEMGRSNSPGGDSDDGSLNEQGQEIAVQVSVHLQSETKSIDTESQGSSHFSPPDDIGSAESNCNYKDGAYENCQL.

A signal peptide spans 1 to 18; sequence MKLHCCLFTLVASIIVPA. The Extracellular segment spans residues 19 to 147; sequence AFVLEDVDFD…LRVIFTSGDM (129 aa). N-linked (GlcNAc...) asparagine glycans are attached at residues Asn-36, Asn-41, and Asn-110. The 93-residue stretch at 45–137 folds into the Ig-like C2-type domain; the sequence is PSSFELSASS…SPIRASYSVT (93 aa). A disulfide bond links Cys-73 and Cys-124. Residues 148–170 traverse the membrane as a helical segment; that stretch reads SVYYMIVCLIAFTITLILNVTRL. Residues 171-362 are Cytoplasmic-facing; it reads CMMSSHLRKT…KDGAYENCQL (192 aa). 2 disordered regions span residues 285–306 and 323–350; these read VINPEMGRSNSPGGDSDDGSLN and ETKSIDTESQGSSHFSPPDDIGSAESNC. Polar residues predominate over residues 323–337; that stretch reads ETKSIDTESQGSSHF.

Glycosylated.

The protein resides in the cell membrane. In terms of biological role, component of the elastin-associated microfibrils. The chain is Microfibril-associated glycoprotein 3 (MFAP3) from Homo sapiens (Human).